A 388-amino-acid polypeptide reads, in one-letter code: Succinate--CoA ligase [ADP-forming] subunit beta (388 aa).

Positions 9 to 244 constitute an ATP-grasp domain; the sequence is KQLFAEFGLP…PSQEDEREAH (236 aa). ATP is bound by residues lysine 46, 53–55, glutamate 99, serine 102, and glutamate 107; that span reads GRG. The Mg(2+) site is built by asparagine 199 and aspartate 213. Residues asparagine 264 and 321-323 contribute to the substrate site; that span reads GIV.

Belongs to the succinate/malate CoA ligase beta subunit family. As to quaternary structure, heterotetramer of two alpha and two beta subunits. Mg(2+) is required as a cofactor.

It catalyses the reaction succinate + ATP + CoA = succinyl-CoA + ADP + phosphate. It carries out the reaction GTP + succinate + CoA = succinyl-CoA + GDP + phosphate. It functions in the pathway carbohydrate metabolism; tricarboxylic acid cycle; succinate from succinyl-CoA (ligase route): step 1/1. In terms of biological role, succinyl-CoA synthetase functions in the citric acid cycle (TCA), coupling the hydrolysis of succinyl-CoA to the synthesis of either ATP or GTP and thus represents the only step of substrate-level phosphorylation in the TCA. The beta subunit provides nucleotide specificity of the enzyme and binds the substrate succinate, while the binding sites for coenzyme A and phosphate are found in the alpha subunit. The sequence is that of Succinate--CoA ligase [ADP-forming] subunit beta from Vibrio campbellii (strain ATCC BAA-1116).